A 104-amino-acid chain; its full sequence is MRGMGNMQGMMKKMQKMQKEMMEAQEALNAEQFEGVAGGGMVKVTVSGQREVVSVNLDESVVDPEDIEMLQDLIVIATNEALKKVEEKTNSTMGKFTQGLNLPF.

Over residues 1–12 (MRGMGNMQGMMK) the composition is skewed to low complexity. A disordered region spans residues 1 to 22 (MRGMGNMQGMMKKMQKMQKEMM).

This sequence belongs to the YbaB/EbfC family. As to quaternary structure, homodimer.

It localises to the cytoplasm. Its subcellular location is the nucleoid. Its function is as follows. Binds to DNA and alters its conformation. May be involved in regulation of gene expression, nucleoid organization and DNA protection. This chain is Nucleoid-associated protein Bsph_0039, found in Lysinibacillus sphaericus (strain C3-41).